The following is a 128-amino-acid chain: Large ribosomal subunit protein eL22 (128 aa).

Belongs to the eukaryotic ribosomal protein eL22 family. Component of the large ribosomal subunit.

Its subcellular location is the cytoplasm. In terms of biological role, component of the large ribosomal subunit. The ribosome is a large ribonucleoprotein complex responsible for the synthesis of proteins in the cell. This chain is Large ribosomal subunit protein eL22 (rpl22), found in Ictalurus punctatus (Channel catfish).